A 42-amino-acid polypeptide reads, in one-letter code: Photosystem II reaction center protein J (42 aa).

Residues 10–30 (IPLWLVGTVVGIAALTLLSVF) traverse the membrane as a helical segment.

The protein belongs to the PsbJ family. As to quaternary structure, PSII is composed of 1 copy each of membrane proteins PsbA, PsbB, PsbC, PsbD, PsbE, PsbF, PsbH, PsbI, PsbJ, PsbK, PsbL, PsbM, PsbT, PsbX, PsbY, PsbZ, Psb30/Ycf12, at least 3 peripheral proteins of the oxygen-evolving complex and a large number of cofactors. It forms dimeric complexes.

The protein localises to the plastid. It is found in the chloroplast thylakoid membrane. Functionally, one of the components of the core complex of photosystem II (PSII). PSII is a light-driven water:plastoquinone oxidoreductase that uses light energy to abstract electrons from H(2)O, generating O(2) and a proton gradient subsequently used for ATP formation. It consists of a core antenna complex that captures photons, and an electron transfer chain that converts photonic excitation into a charge separation. The sequence is that of Photosystem II reaction center protein J from Tupiella akineta (Green alga).